The sequence spans 284 residues: RNase adapter protein RapZ (284 aa).

Gly8–Ser15 serves as a coordination point for ATP. Asp56–Asn59 is a GTP binding site. Residues Arg266–Pro284 form an RNA-binding region.

Belongs to the RapZ-like family. RapZ subfamily. In terms of assembly, homotrimer.

Functionally, modulates the synthesis of GlmS, by affecting the processing and stability of the regulatory small RNA GlmZ. When glucosamine-6-phosphate (GlcN6P) concentrations are high in the cell, RapZ binds GlmZ and targets it to cleavage by RNase E. Consequently, GlmZ is inactivated and unable to activate GlmS synthesis. Under low GlcN6P concentrations, RapZ is sequestered and inactivated by an other regulatory small RNA, GlmY, preventing GlmZ degradation and leading to synthesis of GlmS. The chain is RNase adapter protein RapZ from Escherichia coli O1:K1 / APEC.